The sequence spans 299 residues: MPLLNDLLDFSDHPLMPPPSAQLFAEHLPTEWIQHCLTLSAHATVRRRRLPGDMVIWMVVQNEPITDVVRRLNLSADGEAGMNLLARSAVTQARQRVGAAPVEWLFRQTAQDRGAERYLKDDWHGLQLFAIDGAQFRTPDKPELREYYGSANTSTKRQNAYPVMRLVALMNLGSHILLNAVTAPYRQSETVLAHSMLATIPDNSITLFDKLFYSEDLLLTLNQKGCNRHWLLPAWKNIASEMIELGNTASPGTIPKRLEHLRGALEVVFITKRPRPSRPRSVKISKTRYPVKHSAAPLK.

Basic residues predominate over residues 276 to 291 (PSRPRSVKISKTRYPV). The segment at 276 to 299 (PSRPRSVKISKTRYPVKHSAAPLK) is disordered.

This Escherichia coli (strain K12) protein is Putative transposase InsZ (insZ).